A 148-amino-acid chain; its full sequence is FAD synthase (148 aa).

ATP-binding positions include 14–15 (VF), 19–22 (HVGH), and aspartate 100.

It belongs to the archaeal FAD synthase family. As to quaternary structure, homodimer. It depends on a divalent metal cation as a cofactor.

It catalyses the reaction FMN + ATP + H(+) = FAD + diphosphate. Its pathway is cofactor biosynthesis; FAD biosynthesis; FAD from FMN: step 1/1. In terms of biological role, catalyzes the transfer of the AMP portion of ATP to flavin mononucleotide (FMN) to produce flavin adenine dinucleotide (FAD) coenzyme. The protein is FAD synthase of Thermococcus sibiricus (strain DSM 12597 / MM 739).